We begin with the raw amino-acid sequence, 347 residues long: Bombesin receptor-activated protein C6orf89 homolog (347 aa).

The Cytoplasmic portion of the chain corresponds to 1-58 (MDLAANEISIYDKLSETVDLVRQTGHQCGMSEKAIEKFIRQLLEKNEPQRPPPQYPLL). A helical transmembrane segment spans residues 59–79 (IVVYKVLATLGLILLTAYFVI). At 80–347 (QPFSPLAPEP…ICDGTAFSEL (268 aa)) the chain is on the extracellular side.

In terms of assembly, homodimer. Interacts with BRS3. Interacts (via N-terminus) with SIN3B. Glycosylated.

Its subcellular location is the golgi apparatus membrane. It is found in the cytoplasm. Functionally, exhibits histone deacetylase (HDAC) enhancer properties. May play a role in cell cycle progression and wound repair of bronchial epithelial cells. The protein is Bombesin receptor-activated protein C6orf89 homolog of Pongo abelii (Sumatran orangutan).